The sequence spans 602 residues: GTP-binding protein 2 (602 aa).

Residues 16-64 (GGGPAVGGTLKARGAGSSSGCGGPKGKKKNGRNRGGKANNPPYLPPEAE) are disordered. Positions 40–50 (KGKKKNGRNRG) are enriched in basic residues. One can recognise a tr-type G domain in the interval 170–398 (FLDLRVAVLG…LNILPPLTNS (229 aa)). GTP is bound by residues 179–186 (GNVDSGKS), 260–264 (DLAGH), and 316–319 (SKID).

It belongs to the TRAFAC class translation factor GTPase superfamily. Classic translation factor GTPase family. GTPBP1 subfamily. As to expression, predominantly expressed in thymus, spleen, and testis. Expressed at lower levels in brain, lung, kidney, and ovary.

The chain is GTP-binding protein 2 from Homo sapiens (Human).